The chain runs to 387 residues: Phosphoglycerate kinase (387 aa).

Residues 21-23 (DLN), arginine 36, 59-62 (HLGR), arginine 113, and arginine 146 each bind substrate. ATP contacts are provided by residues lysine 197, glutamate 314, and 340–343 (GGDT).

This sequence belongs to the phosphoglycerate kinase family. Monomer.

It is found in the cytoplasm. The enzyme catalyses (2R)-3-phosphoglycerate + ATP = (2R)-3-phospho-glyceroyl phosphate + ADP. Its pathway is carbohydrate degradation; glycolysis; pyruvate from D-glyceraldehyde 3-phosphate: step 2/5. The protein is Phosphoglycerate kinase of Photorhabdus luminescens (Xenorhabdus luminescens).